Reading from the N-terminus, the 172-residue chain is Nicotinamide-nucleotide adenylyltransferase (172 aa).

Belongs to the archaeal NMN adenylyltransferase family.

It localises to the cytoplasm. The catalysed reaction is beta-nicotinamide D-ribonucleotide + ATP + H(+) = diphosphate + NAD(+). It functions in the pathway cofactor biosynthesis; NAD(+) biosynthesis; NAD(+) from nicotinamide D-ribonucleotide: step 1/1. The polypeptide is Nicotinamide-nucleotide adenylyltransferase (Methanococcus aeolicus (strain ATCC BAA-1280 / DSM 17508 / OCM 812 / Nankai-3)).